A 172-amino-acid chain; its full sequence is Peptidyl-prolyl cis-trans isomerase (172 aa).

The 164-residue stretch at 7-170 folds into the PPIase cyclophilin-type domain; sequence FFDMSVGGQP…KKVVVEDCGQ (164 aa).

Belongs to the cyclophilin-type PPIase family. In terms of processing, not glycosylated. Expressed in pollen.

The protein resides in the cytoplasm. It carries out the reaction [protein]-peptidylproline (omega=180) = [protein]-peptidylproline (omega=0). Its activity is regulated as follows. Binds cyclosporin A (CsA). CsA mediates some of its effects via an inhibitory action on PPIase. Its function is as follows. PPIases accelerate the folding of proteins. It catalyzes the cis-trans isomerization of proline imidic peptide bonds in oligopeptides. In Catharanthus roseus (Madagascar periwinkle), this protein is Peptidyl-prolyl cis-trans isomerase (PCKR1).